The sequence spans 187 residues: MAGALRNAMVYLGLAEDDRYAEDTEPETTRPRVEAAREVRVESRHEARPEVRHEPRPEVSVERRPAPATTAQVTPIRKQVAHVVPQTSTTSSSPELHRITTIHPRTYNEAKTIGESFREGVPVIMNLTDMDDSDAKRLVDFSAGLVFGLHGAIERVTNKVFLLSPANVEVASQEEERPTERTFFNQS.

Positions 13–74 (GLAEDDRYAE…PAPATTAQVT (62 aa)) are disordered. Basic and acidic residues predominate over residues 16–65 (EDDRYAEDTEPETTRPRVEAAREVRVESRHEARPEVRHEPRPEVSVERRP).

The protein belongs to the SepF family. In terms of assembly, homodimer. Interacts with FtsZ.

The protein localises to the cytoplasm. Its function is as follows. Cell division protein that is part of the divisome complex and is recruited early to the Z-ring. Probably stimulates Z-ring formation, perhaps through the cross-linking of FtsZ protofilaments. Its function overlaps with FtsA. The protein is Cell division protein SepF of Kineococcus radiotolerans (strain ATCC BAA-149 / DSM 14245 / SRS30216).